A 423-amino-acid chain; its full sequence is Cell adhesion molecule CEACAM16 (423 aa).

The signal sequence occupies residues 1-22 (MKMPLTWGSWFLLSAWILNAGA). Asn38 carries N-linked (GlcNAc...) asparagine glycosylation. The interval 77–96 (ETPGPAHTGREAVRPDGSLD) is disordered. Residues 84–95 (TGREAVRPDGSL) are compositionally biased toward basic and acidic residues. 2 Ig-like C2-type domains span residues 134 to 219 (PPTV…LNLT) and 224 to 310 (PERV…ASVV). Cysteines 155 and 202 form a disulfide. Asn217 carries an N-linked (GlcNAc...) asparagine glycan. Cysteines 253 and 294 form a disulfide.

It belongs to the immunoglobulin superfamily. CEA family. In terms of assembly, homooligomer; can for homodimers and homotetramers. Interacts with TECTA and TECTB.

It localises to the secreted. In terms of biological role, required for proper hearing, plays a role in maintaining the integrity of the tectorial membrane. The polypeptide is Cell adhesion molecule CEACAM16 (Rattus norvegicus (Rat)).